Here is a 616-residue protein sequence, read N- to C-terminus: uncharacterized protein (616 aa).

Disordered regions lie at residues 166 to 243 and 272 to 298; these read SRTY…TPEL and DHEE…IEEI. Basic and acidic residues predominate over residues 184–200; it reads RVDESRPSENSSRHDYV. Residues 221-237 show a composition bias toward polar residues; that stretch reads TRTSNVTQTQPPTNQVF. Residues 272–287 are compositionally biased toward acidic residues; that stretch reads DHEEEEGQDDDEETEI. In terms of domain architecture, Ubiquitin-like spans 343 to 417; the sequence is ILIKLKFMND…VHCHISTTPY (75 aa).

This is an uncharacterized protein from Caenorhabditis elegans.